Here is a 335-residue protein sequence, read N- to C-terminus: Ferredoxin--NADP reductase (335 aa).

Positions 34, 42, 47, 87, 121, 287, and 328 each coordinate FAD.

It belongs to the ferredoxin--NADP reductase type 2 family. As to quaternary structure, homodimer. FAD serves as cofactor.

The catalysed reaction is 2 reduced [2Fe-2S]-[ferredoxin] + NADP(+) + H(+) = 2 oxidized [2Fe-2S]-[ferredoxin] + NADPH. In Rickettsia felis (strain ATCC VR-1525 / URRWXCal2) (Rickettsia azadi), this protein is Ferredoxin--NADP reductase.